The following is a 92-amino-acid chain: Small ribosomal subunit protein uS19 (92 aa).

This sequence belongs to the universal ribosomal protein uS19 family.

Protein S19 forms a complex with S13 that binds strongly to the 16S ribosomal RNA. This chain is Small ribosomal subunit protein uS19, found in Buchnera aphidicola subsp. Baizongia pistaciae (strain Bp).